The chain runs to 125 residues: uncharacterized protein (125 aa).

This is an uncharacterized protein from Escherichia coli (strain K12).